The chain runs to 129 residues: Small ribosomal subunit protein uS11 (129 aa).

It belongs to the universal ribosomal protein uS11 family. As to quaternary structure, part of the 30S ribosomal subunit. Interacts with proteins S7 and S18. Binds to IF-3.

Located on the platform of the 30S subunit, it bridges several disparate RNA helices of the 16S rRNA. Forms part of the Shine-Dalgarno cleft in the 70S ribosome. The polypeptide is Small ribosomal subunit protein uS11 (Colwellia psychrerythraea (strain 34H / ATCC BAA-681) (Vibrio psychroerythus)).